We begin with the raw amino-acid sequence, 524 residues long: Tissue-resident T-cell transcription regulator protein ZNF683 (524 aa).

Positions 130–142 (NKDKLGKQPERAG) are enriched in basic and acidic residues. Disordered stretches follow at residues 130 to 166 (NKDK…NRKS) and 265 to 303 (QALP…LSSQ). 2 C2H2-type zinc fingers span residues 322-344 (YECN…LRVH) and 350-372 (FQCA…HLVH). The C2H2-type 3; degenerate zinc finger occupies 398–420 (REREVCHKRFSSSSNLKTHLRLH). A C2H2-type 4 zinc finger spans residues 426–448 (FQCSVCRSRFTQHIHLKLHHRLH).

This sequence belongs to the krueppel C2H2-type zinc-finger protein family. As to expression, expressed in terminally differentiated effector CD8(+) T-cells, but not in naive and central memory cells. Expressed in terminally differentiated natural killer (NK) cells and natural killer (NKT) T-cells (at protein level). Expressed strongly in effector-type CD8(+) T-cells and weakly in naive and memory CD8(+) T-cells. Expressed in terminally differentiated natural killer (NK) cells. Isoform 2 is strongly expressed in effector CD8(+) T and natural killer (NK) cells. Isoform 1 is expressed in effector CD8(+) T and natural killer (NK) cells. In terms of tissue distribution, (Microbial infection) Expressed in cytomegalovirus (CMV)-infected effector CD8(+) T-cells (at protein level).

The protein localises to the nucleus. Transcription factor that mediates a transcriptional program in various innate and adaptive immune tissue-resident lymphocyte T-cell types such as tissue-resident memory T (Trm), natural killer (trNK) and natural killer T (NKT) cells and negatively regulates gene expression of proteins that promote the egress of tissue-resident T-cell populations from non-lymphoid organs. Plays a role in the development, retention and long-term establishment of adaptive and innate tissue-resident lymphocyte T cell types in non-lymphoid organs, such as the skin and gut, but also in other nonbarrier tissues like liver and kidney, and therefore may provide immediate immunological protection against reactivating infections or viral reinfection. Also plays a role in the differentiation of both thymic and peripheral NKT cells. Negatively regulates the accumulation of interferon-gamma (IFN-gamma) in NKT cells at steady state or after antigenic stimulation. Positively regulates granzyme B production in NKT cells after innate stimulation. Associates with the transcriptional repressor PRDM1/BLIMP1 to chromatin at gene promoter regions. In terms of biological role, lacks transcriptional repressor activity. Binds to DNA within promoter regions of the transcriptional repressor PRDM1/BLIMP1 target sites. Unable to regulate interferon-gamma (IFN-gamma) production in cytomegalovirus (CMV)-infected effector CD8(+) T-cells. Functionally, transcriptional repressor that binds to DNA within promoter regions of the transcriptional repressor PRDM1/BLIMP1 target sites. Regulates interferon-gamma (IFN-gamma) production in cytomegalovirus (CMV)-infected effector CD8(+) T cells. This Homo sapiens (Human) protein is Tissue-resident T-cell transcription regulator protein ZNF683.